The chain runs to 126 residues: Thioredoxin-like 3-3 (126 aa).

The segment at 1 to 24 (MRKQESEGANLEFESKSNDNGNVK) is disordered. Positions 5–126 (ESEGANLEFE…RLHDRLWLHS (122 aa)) constitute a Thioredoxin domain. Catalysis depends on nucleophile residues Cys-55 and Cys-58. An intrachain disulfide couples Cys-55 to Cys-58.

It belongs to the thioredoxin family.

Functionally, probable thiol-disulfide oxidoreductase that may participate in various redox reactions. The protein is Thioredoxin-like 3-3 of Arabidopsis thaliana (Mouse-ear cress).